The primary structure comprises 241 residues: UPF0173 metal-dependent hydrolase Haur_4333 (241 aa).

It belongs to the UPF0173 family.

This Herpetosiphon aurantiacus (strain ATCC 23779 / DSM 785 / 114-95) protein is UPF0173 metal-dependent hydrolase Haur_4333.